The sequence spans 366 residues: Structure-specific endonuclease subunit SLX1 (366 aa).

One can recognise a GIY-YIG domain in the interval 14-95 (AFYCCYLLRS…QNTHATRHID (82 aa)). Disordered regions lie at residues 31–59 (IGST…SMQG) and 102–124 (RAEE…KRPP). Basic residues predominate over residues 109–123 (GKKKATSPGRRRKRP). The SLX1-type zinc finger occupies 234 to 289 (CGVCKNPADMSSSLILVCPIEACQTVSHLSCLSNKFLTEGGELETLVPLEGTCPGC). The interval 317-366 (KPKRKRKSDNPAESDAADGQALEQEDEELDETWMEDMSQDEEPSPVKKSR) is disordered. Residues 339–359 (EQEDEELDETWMEDMSQDEEP) are compositionally biased toward acidic residues.

This sequence belongs to the SLX1 family. In terms of assembly, forms a heterodimer with SLX4. It depends on a divalent metal cation as a cofactor.

Its subcellular location is the nucleus. In terms of biological role, catalytic subunit of the SLX1-SLX4 structure-specific endonuclease that resolves DNA secondary structures generated during DNA repair and recombination. Has endonuclease activity towards branched DNA substrates, introducing single-strand cuts in duplex DNA close to junctions with ss-DNA. The polypeptide is Structure-specific endonuclease subunit SLX1 (Phaeosphaeria nodorum (strain SN15 / ATCC MYA-4574 / FGSC 10173) (Glume blotch fungus)).